Consider the following 143-residue polypeptide: Putative complexin-1 (143 aa).

Residues 16–72 (EVTGGLGMKDDGGEKTETGEDPEVIAARLEQEERRKEKHRKMENEREKMRQGIRDKY) are disordered. 2 stretches are compositionally biased toward basic and acidic residues: residues 23–33 (MKDDGGEKTET) and 44–72 (LEQEERRKEKHRKMENEREKMRQGIRDKY). Positions 40-71 (IAARLEQEERRKEKHRKMENEREKMRQGIRDK) form a coiled coil.

Belongs to the complexin/synaphin family.

It is found in the cytoplasm. The protein localises to the cytosol. Positively regulates a late step in synaptic vesicle exocytosis. The chain is Putative complexin-1 (cpx-1) from Caenorhabditis elegans.